A 280-amino-acid chain; its full sequence is Undecaprenyl-diphosphatase (280 aa).

Helical transmembrane passes span 19 to 39 (FLPVSSTGHLFLFSSFFPFSG), 44 to 64 (FDDLFDIFIQSGAILSVLFLY), 89 to 109 (FYFLVQIVIGAFPILVVGFIA), 125 to 145 (ILASAWIFGGVLILIAEWFFQ), 156 to 176 (VGFRDAILIGIFQCVALIPGV), 197 to 217 (AEFSFFLAVPVLLAAGIYKLI), 226 to 246 (VTIPILAFGFLISFLLCTLVI), and 259 to 279 (GVFGIYRILLGVGVLVFTKFI).

Belongs to the UppP family.

The protein localises to the cell inner membrane. The catalysed reaction is di-trans,octa-cis-undecaprenyl diphosphate + H2O = di-trans,octa-cis-undecaprenyl phosphate + phosphate + H(+). In terms of biological role, catalyzes the dephosphorylation of undecaprenyl diphosphate (UPP). Confers resistance to bacitracin. The sequence is that of Undecaprenyl-diphosphatase from Leptospira borgpetersenii serovar Hardjo-bovis (strain L550).